The sequence spans 253 residues: Imidazole glycerol phosphate synthase subunit HisF (253 aa).

Catalysis depends on residues Asp11 and Asp130.

Belongs to the HisA/HisF family. Heterodimer of HisH and HisF.

It localises to the cytoplasm. It carries out the reaction 5-[(5-phospho-1-deoxy-D-ribulos-1-ylimino)methylamino]-1-(5-phospho-beta-D-ribosyl)imidazole-4-carboxamide + L-glutamine = D-erythro-1-(imidazol-4-yl)glycerol 3-phosphate + 5-amino-1-(5-phospho-beta-D-ribosyl)imidazole-4-carboxamide + L-glutamate + H(+). It participates in amino-acid biosynthesis; L-histidine biosynthesis; L-histidine from 5-phospho-alpha-D-ribose 1-diphosphate: step 5/9. Functionally, IGPS catalyzes the conversion of PRFAR and glutamine to IGP, AICAR and glutamate. The HisF subunit catalyzes the cyclization activity that produces IGP and AICAR from PRFAR using the ammonia provided by the HisH subunit. In Dehalococcoides mccartyi (strain ATCC BAA-2100 / JCM 16839 / KCTC 5957 / BAV1), this protein is Imidazole glycerol phosphate synthase subunit HisF.